The sequence spans 155 residues: RNA pyrophosphohydrolase (155 aa).

One can recognise a Nudix hydrolase domain in the interval Gly6 to Thr148. The short motif at Gly38–Gly59 is the Nudix box element.

This sequence belongs to the Nudix hydrolase family. RppH subfamily. It depends on a divalent metal cation as a cofactor.

Functionally, accelerates the degradation of transcripts by removing pyrophosphate from the 5'-end of triphosphorylated RNA, leading to a more labile monophosphorylated state that can stimulate subsequent ribonuclease cleavage. This Francisella tularensis subsp. mediasiatica (strain FSC147) protein is RNA pyrophosphohydrolase.